Consider the following 251-residue polypeptide: Imidazole glycerol phosphate synthase subunit HisF (251 aa).

Catalysis depends on residues Asp11 and Asp130.

Belongs to the HisA/HisF family. Heterodimer of HisH and HisF.

It is found in the cytoplasm. It carries out the reaction 5-[(5-phospho-1-deoxy-D-ribulos-1-ylimino)methylamino]-1-(5-phospho-beta-D-ribosyl)imidazole-4-carboxamide + L-glutamine = D-erythro-1-(imidazol-4-yl)glycerol 3-phosphate + 5-amino-1-(5-phospho-beta-D-ribosyl)imidazole-4-carboxamide + L-glutamate + H(+). Its pathway is amino-acid biosynthesis; L-histidine biosynthesis; L-histidine from 5-phospho-alpha-D-ribose 1-diphosphate: step 5/9. In terms of biological role, IGPS catalyzes the conversion of PRFAR and glutamine to IGP, AICAR and glutamate. The HisF subunit catalyzes the cyclization activity that produces IGP and AICAR from PRFAR using the ammonia provided by the HisH subunit. The chain is Imidazole glycerol phosphate synthase subunit HisF from Chlorobaculum tepidum (strain ATCC 49652 / DSM 12025 / NBRC 103806 / TLS) (Chlorobium tepidum).